Consider the following 261-residue polypeptide: Src-like-adapter 2 (261 aa).

A compositionally biased stretch (basic residues) spans 1–10; it reads MGSLPSRRKS. Positions 1–31 are disordered; that stretch reads MGSLPSRRKSLPSPSLSSSVQGQGPVTMEAE. Glycine 2 carries the N-myristoyl glycine lipid modification. The SH3 domain maps to 32 to 92; sequence RSKATAVALG…PSVHVAKVSH (61 aa). Residues 94–191 enclose the SH2 domain; sequence WLYEGLSREK…DICCLLKEPC (98 aa). The interval 195–261 is SLA C-terminal; it reads RAGPLPGKDI…NDEAVSLDDA (67 aa).

As to quaternary structure, interacts (via SH2 domain) with ZAP70 (phosphorylated) and CD3Z (phosphorylated). Interacts (via SH2 domain) with CSF1R (phosphorylated). Interacts (via its C-terminal domain) with CBL (phosphorylated). Phosphorylated by CSF1R. Predominantly expressed in immune system, with highest levels in peripheral blood leukocytes. Expressed in spleen, thymus and lymph nodes. Expressed in T-cells as well as in monocytes, and at low level in B-cells. Also detected in placenta, prostate, skin, retina and colon.

Its subcellular location is the cytoplasm. The protein resides in the cell membrane. It is found in the cytoplasmic vesicle. Functionally, adapter protein, which negatively regulates T-cell receptor (TCR) signaling. Inhibits T-cell antigen-receptor induced activation of nuclear factor of activated T-cells. May act by linking signaling proteins such as ZAP70 with CBL, leading to a CBL dependent degradation of signaling proteins. The protein is Src-like-adapter 2 (SLA2) of Homo sapiens (Human).